The primary structure comprises 283 residues: Tetraspanin-33 (283 aa).

Topologically, residues 1–24 (MARRPRAPAASGEEFSFVSPLVKY) are cytoplasmic. Residues 25-45 (LLFFFNMLFWVISMVMVAVGV) traverse the membrane as a helical segment. Over 46-64 (YARLMKHAEAALACLAVDP) the chain is Extracellular. The helical transmembrane segment at 65-85 (AILLIVVGVLMFLLTFCGCIG) threads the bilayer. Residues 86-96 (SLRENICLLQT) are Cytoplasmic-facing. The helical transmembrane segment at 97 to 117 (FSLCLTAVFLLQLAAGILGFV) threads the bilayer. Residues 118 to 235 (FSDKARGKVS…DKLVNWIHSN (118 aa)) lie on the Extracellular side of the membrane. 4 disulfides stabilise this stretch: Cys-156–Cys-224, Cys-157–Cys-189, Cys-173–Cys-183, and Cys-190–Cys-203. N-linked (GlcNAc...) asparagine glycosylation is present at Asn-172. A helical membrane pass occupies residues 236 to 256 (LFLLGGVALGLAIPQLVGILL). Over 257 to 283 (SQILVNQIKDQIKLQLYNQQHRADPWY) the chain is Cytoplasmic.

This sequence belongs to the tetraspanin (TM4SF) family. As to quaternary structure, homodimer; disulfide-linked. Interacts (via extracellular domain) with ADAM10 (via extracellular domain). Interacts (via cytoplasmic domain) with PLEKHA7 (via WW domains); the interaction is dependent on PDZD11 being bound to PLEKHA7 and facilitates the docking of ADAM10 to zonula adherens. As to expression, predominantly expressed in erythroblasts.

The protein localises to the cell membrane. It localises to the cell junction. Its subcellular location is the adherens junction. It is found in the cytoplasm. Its function is as follows. Part of TspanC8 subgroup, composed of 6 members that interact with the transmembrane metalloprotease ADAM10. This interaction is required for ADAM10 exit from the endoplasmic reticulum and for enzymatic maturation and trafficking to the cell surface as well as substrate specificity. Different TspanC8/ADAM10 complexes have distinct substrates. Plays an important role in normal erythropoiesis. It has a role in the differentiation of erythroid progenitors. Negatively regulates ligand-induced Notch activity probably by regulating ADAM10 activity. Mediates docking of ADAM10 to zonula adherens by interacting with ADAM10 and, in a PDZD11-dependent manner, with the zonula adherens protein PLEKHA7. In Homo sapiens (Human), this protein is Tetraspanin-33.